Reading from the N-terminus, the 257-residue chain is MSFEINWEKLSSDSDLTSNIREGLNGYFQELELPSYVRAIELVDFGFGKIAPNITLREISSPLQDFYDAVNEEYEEDNETSSEMHGRDGQNVGESGEEAVVEKKETDTQFLIEFEYKGDMSLTLTAELVLNYPVERFMTLPLKISISNIGLHSLCLVSYLAKQVFISMLCDVSDPVLDDVDCVLDPNGPVLLANKPLERISIIRSMKIETEIGDRFKDDGSTLRSVGQLEEFIVQKLKDFLRKELAWPSWVNLDFND.

An SMP-LTD domain is found at 1–256 (MSFEINWEKL…WPSWVNLDFN (256 aa)). The tract at residues 74 to 98 (YEEDNETSSEMHGRDGQNVGESGEE) is disordered.

This sequence belongs to the MDM12 family. Component of the ER-mitochondria encounter structure (ERMES) or MDM complex, composed of MMM1, MDM10, MDM12 and MDM34. An MMM1 homodimer associates with one molecule of MDM12 on each side in a pairwise head-to-tail manner, and the SMP-LTD domains of MMM1 and MDM12 generate a continuous hydrophobic tunnel for phospholipid trafficking.

Its subcellular location is the mitochondrion outer membrane. It is found in the endoplasmic reticulum membrane. Its function is as follows. Component of the ERMES/MDM complex, which serves as a molecular tether to connect the endoplasmic reticulum (ER) and mitochondria. Components of this complex are involved in the control of mitochondrial shape and protein biogenesis, and function in nonvesicular lipid trafficking between the ER and mitochondria. MDM12 is required for the interaction of the ER-resident membrane protein MMM1 and the outer mitochondrial membrane-resident beta-barrel protein MDM10. The MDM12-MMM1 subcomplex functions in the major beta-barrel assembly pathway that is responsible for biogenesis of all mitochondrial outer membrane beta-barrel proteins, and acts in a late step after the SAM complex. The MDM10-MDM12-MMM1 subcomplex further acts in the TOM40-specific pathway after the action of the MDM12-MMM1 complex. Essential for establishing and maintaining the structure of mitochondria and maintenance of mtDNA nucleoids. This is Mitochondrial distribution and morphology protein 12 from Candida glabrata (strain ATCC 2001 / BCRC 20586 / JCM 3761 / NBRC 0622 / NRRL Y-65 / CBS 138) (Yeast).